The sequence spans 831 residues: DNA ligase (831 aa).

Residues Asp34–Asp38, Ser83–Leu84, and Glu114 contribute to the NAD(+) site. Residue Lys116 is the N6-AMP-lysine intermediate of the active site. NAD(+)-binding residues include Arg137, Glu174, Lys291, and Lys315. Residues Cys409, Cys412, Cys427, and Cys433 each contribute to the Zn(2+) site. A BRCT domain is found at Ala749–Gln831.

This sequence belongs to the NAD-dependent DNA ligase family. LigA subfamily. It depends on Mg(2+) as a cofactor. The cofactor is Mn(2+).

The enzyme catalyses NAD(+) + (deoxyribonucleotide)n-3'-hydroxyl + 5'-phospho-(deoxyribonucleotide)m = (deoxyribonucleotide)n+m + AMP + beta-nicotinamide D-nucleotide.. Functionally, DNA ligase that catalyzes the formation of phosphodiester linkages between 5'-phosphoryl and 3'-hydroxyl groups in double-stranded DNA using NAD as a coenzyme and as the energy source for the reaction. It is essential for DNA replication and repair of damaged DNA. The protein is DNA ligase of Xylella fastidiosa (strain M23).